The following is a 449-amino-acid chain: Asparagine--tRNA ligase (449 aa).

This sequence belongs to the class-II aminoacyl-tRNA synthetase family. As to quaternary structure, homodimer.

It localises to the cytoplasm. The catalysed reaction is tRNA(Asn) + L-asparagine + ATP = L-asparaginyl-tRNA(Asn) + AMP + diphosphate + H(+). This is Asparagine--tRNA ligase from Desulfotalea psychrophila (strain LSv54 / DSM 12343).